We begin with the raw amino-acid sequence, 211 residues long: Phosphoserine phosphatase 1 (211 aa).

H9 acts as the Tele-phosphohistidine intermediate in catalysis. H150 is a catalytic residue.

It belongs to the histidine phosphatase superfamily. Metal-independent phosphoserine phosphatase family. In terms of assembly, homodimer. Can also form a heterodimer with PspB.

The catalysed reaction is O-phospho-L-serine + H2O = L-serine + phosphate. It catalyses the reaction O-phospho-D-serine + H2O = D-serine + phosphate. Its pathway is amino-acid biosynthesis; L-serine biosynthesis; L-serine from 3-phospho-D-glycerate: step 3/3. With respect to regulation, activity is not inhibited by EDTA in vitro, nor enhanced by the addition of Mg(2+). Its function is as follows. Catalyzes the dephosphorylation of L-phosphoserine to serine and inorganic phosphate. Is poorly or not active toward D-phosphoserine, DL-phosphothreonine, 3-phosphoglycerate, para-nitrophenylphosphate, and fructose-6-phosphate. Does not display phosphoglycerate mutase activity. This Hydrogenobacter thermophilus (strain DSM 6534 / IAM 12695 / TK-6) protein is Phosphoserine phosphatase 1 (pspA).